A 932-amino-acid chain; its full sequence is Glycine dehydrogenase (decarboxylating) (932 aa).

Residue K685 is modified to N6-(pyridoxal phosphate)lysine.

It belongs to the GcvP family. The glycine cleavage system is composed of four proteins: P, T, L and H. Pyridoxal 5'-phosphate is required as a cofactor.

It carries out the reaction N(6)-[(R)-lipoyl]-L-lysyl-[glycine-cleavage complex H protein] + glycine + H(+) = N(6)-[(R)-S(8)-aminomethyldihydrolipoyl]-L-lysyl-[glycine-cleavage complex H protein] + CO2. The glycine cleavage system catalyzes the degradation of glycine. The P protein binds the alpha-amino group of glycine through its pyridoxal phosphate cofactor; CO(2) is released and the remaining methylamine moiety is then transferred to the lipoamide cofactor of the H protein. This Brucella melitensis biotype 1 (strain ATCC 23456 / CCUG 17765 / NCTC 10094 / 16M) protein is Glycine dehydrogenase (decarboxylating).